The chain runs to 326 residues: ATP-dependent 6-phosphofructokinase 2 (326 aa).

An ATP-binding site is contributed by Gly14. An ADP-binding site is contributed by 24–28; sequence RAVTR. ATP contacts are provided by residues 75 to 76 and 105 to 108; these read RC and GDGS. Asp106 is a Mg(2+) binding site. 129–131 contacts substrate; the sequence is TID. The active-site Proton acceptor is the Asp131. Residue Arg158 coordinates ADP. Substrate is bound by residues Arg166 and 173–175; that span reads MGR. ADP contacts are provided by residues 189-191, Lys215, and 217-219; these read GAE and KNS. Substrate contacts are provided by residues Glu226, Arg250, and 256–259; that span reads HLQR.

Belongs to the phosphofructokinase type A (PFKA) family. ATP-dependent PFK group I subfamily. Prokaryotic clade 'B1' sub-subfamily. In terms of assembly, homotetramer. Mg(2+) is required as a cofactor.

Its subcellular location is the cytoplasm. The catalysed reaction is beta-D-fructose 6-phosphate + ATP = beta-D-fructose 1,6-bisphosphate + ADP + H(+). It functions in the pathway carbohydrate degradation; glycolysis; D-glyceraldehyde 3-phosphate and glycerone phosphate from D-glucose: step 3/4. Allosterically activated by ADP and other diphosphonucleosides, and allosterically inhibited by phosphoenolpyruvate. In terms of biological role, catalyzes the phosphorylation of D-fructose 6-phosphate to fructose 1,6-bisphosphate by ATP, the first committing step of glycolysis. This chain is ATP-dependent 6-phosphofructokinase 2, found in Bacteroides thetaiotaomicron (strain ATCC 29148 / DSM 2079 / JCM 5827 / CCUG 10774 / NCTC 10582 / VPI-5482 / E50).